We begin with the raw amino-acid sequence, 119 residues long: Ergochrome gene cluster protein CPUR_05426 (119 aa).

The protein operates within pigment biosynthesis. Part of the ergochrome gene cluster responsible for the typical purple-black color of the ergot sclerotia. The ergochrome gene cluster produces several ergot pigments including the yellow ergochrome secalonic acid and its derivatives, as well as the red anthraquinones endocrocin and clavorubin. The pathway begins with the synthesis of atrochrysone thioester by the polyketide synthase (PKS) CPUR_05437. The atrochrysone carboxyl ACP thioesterase CPUR_05436 then breaks the thioester bond and releases the atrochrysone carboxylic acid from CPUR_05437. The atrochrysone carboxylic acid is then converted to atrochrysone which is further transformed into emodin anthrone. The next step is performed by the anthrone oxygenase CPUR_05434 that catalyzes the oxidation of emodinanthrone to emodin. Emodin is further modified to yield monodictyphenone via several steps involving CPUR_05427, CPUR_05428, CPUR_05429 and CPUR_05430. The short chain dehydrogenase/reductase CPUR_05418 then catalyzes the C-5 ketoreduction to give the xanthone skeleton of the monomeric units. Ergochromes formation requires further dimerization steps of different xanthone units, probably catalyzed by the cytochrome P450 monooxygenase CPUR_05419. CPUR_05425, CPUR_05426 and CPUR_05431 are unique to Claviceps, thus it is likely that they are involved in further modification of xanthone units or in their dimerization. The yellow ergochromes and the red anthraquinone pigments endocrocin and clavorubin are products from the same PKS derived precursors and the latter are likely shunt products in the pathway of xanthone biosynthesis. It is proposed that atrochrysone carboxylic acid released from the PKS CPUR_05437 can also be converted to endocrocin anthrone which is further oxidized into endocrocin by CPUR_05435. Endocrocin could be then modified to clavorubin, possibly by CPUR_05423 and CPUR_05431. Clavorubin is the principal anthraquinone metabolite produced by the cluster with a much higher yield compared to endocrocin. The polypeptide is Ergochrome gene cluster protein CPUR_05426 (Claviceps purpurea (strain 20.1) (Ergot fungus)).